The following is a 217-amino-acid chain: Magnetosome protein MamA (217 aa).

TPR repeat units lie at residues 12-44 (VTLY…NDDI), 46-79 (QVYY…DAFD), 80-113 (VEVA…APDN), 114-147 (IKVA…NPVN), 148-181 (FNVR…RPNE), and 182-215 (GKVH…DERS). Positions 41 to 112 (NDDIRQVYYR…LERSIADAPD (72 aa)) are N-terminal domain. Positions 113–217 (NIKVATVLGL…ANELDERSAV (105 aa)) are C-terminal domain.

Belongs to the magnetosome MamA family. As to quaternary structure, forms round, 20 nm diameter complexes with a central cavity. Probably binds MamC. Interacts with full-length Mms6.

It is found in the magnetosome membrane. Its function is as follows. Probably forms a large homooligomer on which other magnetosome subunits assemble. Required for formation of functional magnetosomes from pre-existing vesicles. The chain is Magnetosome protein MamA from Magnetospirillum gryphiswaldense (strain DSM 6361 / JCM 21280 / NBRC 15271 / MSR-1).